Consider the following 332-residue polypeptide: MALSRALRCCQRIFSWIPVIIISSVVLWSYYAYVFELCFVTLSNNLERVTYLLIFHVCFIMFCWTYWKAIFTPPSTPTKKFHLSYTDKERYEMEERPEVQKQILVDIAKKLPIFTRAQSGAIRFCDRCQVIKPDRCHHCSVCETCVLKMDHHCPWVNNCVGFSNYKFFLLFLSYSMIYCVFIASTVFQYFLKFWVGDLPNGPAKFHVLFLLFVALMFFVSLMFLFGYHCWLVAKNRSTLEAFSPPVFQNGPDRNGFNVGLSKNLRQVFGEHKKLWFIPVFTSQGDGHYFPLRTLRESENPLLANEEKWVEDGGSDEESADENGSSLLIRTES.

The Cytoplasmic segment spans residues 1 to 14 (MALSRALRCCQRIF). Residues 15 to 35 (SWIPVIIISSVVLWSYYAYVF) form a helical membrane-spanning segment. Over 36-50 (ELCFVTLSNNLERVT) the chain is Lumenal. A helical membrane pass occupies residues 51–71 (YLLIFHVCFIMFCWTYWKAIF). Topologically, residues 72–166 (TPPSTPTKKF…NNCVGFSNYK (95 aa)) are cytoplasmic. The DHHC domain maps to 123-173 (RFCDRCQVIKPDRCHHCSVCETCVLKMDHHCPWVNNCVGFSNYKFFLLFLS). Zn(2+)-binding residues include cysteine 125 and cysteine 128. Lysine 132 provides a ligand contact to substrate. Histidine 138, cysteine 139, cysteine 142, cysteine 145, and histidine 152 together coordinate Zn(2+). The active-site S-palmitoyl cysteine intermediate is cysteine 153. Cysteine 159 is a Zn(2+) binding site. A helical transmembrane segment spans residues 167 to 187 (FFLLFLSYSMIYCVFIASTVF). Residues 188-204 (QYFLKFWVGDLPNGPAK) lie on the Lumenal side of the membrane. Residues 205–228 (FHVLFLLFVALMFFVSLMFLFGYH) traverse the membrane as a helical segment. Topologically, residues 229 to 332 (CWLVAKNRST…GSSLLIRTES (104 aa)) are cytoplasmic. Residues 305 to 332 (EEKWVEDGGSDEESADENGSSLLIRTES) form a disordered region.

Belongs to the DHHC palmitoyltransferase family. In terms of processing, autopalmitoylated (in vitro).

It is found in the golgi apparatus membrane. The protein resides in the postsynaptic density. It catalyses the reaction L-cysteinyl-[protein] + hexadecanoyl-CoA = S-hexadecanoyl-L-cysteinyl-[protein] + CoA. The enzyme catalyses L-cysteinyl-[protein] + tetradecanoyl-CoA = S-tetradecanoyl-L-cysteinyl-[protein] + CoA. The catalysed reaction is L-cysteinyl-[protein] + octadecanoyl-CoA = S-octadecanoyl-L-cysteinyl-[protein] + CoA. Functionally, palmitoyltransferase that catalyzes the addition of palmitate onto various protein substrates. Has no stringent fatty acid selectivity and in addition to palmitate can also transfer onto target proteins myristate from tetradecanoyl-CoA and stearate from octadecanoyl-CoA. May thereby regulate target proteins association and localization to membranes. In the nervous system, probably catalyzes the palmitoylation of synaptic proteins and is involved in the differentiation of dopaminergic neurons and the development of the diencephalon. The polypeptide is Palmitoyltransferase ZDHHC15B (zdhhc15b) (Danio rerio (Zebrafish)).